We begin with the raw amino-acid sequence, 249 residues long: Ubiquinone/menaquinone biosynthesis C-methyltransferase UbiE (249 aa).

S-adenosyl-L-methionine is bound by residues T72, D93, and 121-122; that span reads DA.

It belongs to the class I-like SAM-binding methyltransferase superfamily. MenG/UbiE family.

The catalysed reaction is a 2-demethylmenaquinol + S-adenosyl-L-methionine = a menaquinol + S-adenosyl-L-homocysteine + H(+). It catalyses the reaction a 2-methoxy-6-(all-trans-polyprenyl)benzene-1,4-diol + S-adenosyl-L-methionine = a 5-methoxy-2-methyl-3-(all-trans-polyprenyl)benzene-1,4-diol + S-adenosyl-L-homocysteine + H(+). It participates in quinol/quinone metabolism; menaquinone biosynthesis; menaquinol from 1,4-dihydroxy-2-naphthoate: step 2/2. Its pathway is cofactor biosynthesis; ubiquinone biosynthesis. Functionally, methyltransferase required for the conversion of demethylmenaquinol (DMKH2) to menaquinol (MKH2) and the conversion of 2-polyprenyl-6-methoxy-1,4-benzoquinol (DDMQH2) to 2-polyprenyl-3-methyl-6-methoxy-1,4-benzoquinol (DMQH2). The chain is Ubiquinone/menaquinone biosynthesis C-methyltransferase UbiE from Teredinibacter turnerae (strain ATCC 39867 / T7901).